The sequence spans 367 residues: Phosphoribosylaminoimidazole-succinocarboxamide synthase (367 aa).

It belongs to the SAICAR synthetase family.

The enzyme catalyses 5-amino-1-(5-phospho-D-ribosyl)imidazole-4-carboxylate + L-aspartate + ATP = (2S)-2-[5-amino-1-(5-phospho-beta-D-ribosyl)imidazole-4-carboxamido]succinate + ADP + phosphate + 2 H(+). It participates in purine metabolism; IMP biosynthesis via de novo pathway; 5-amino-1-(5-phospho-D-ribosyl)imidazole-4-carboxamide from 5-amino-1-(5-phospho-D-ribosyl)imidazole-4-carboxylate: step 1/2. This Shewanella pealeana (strain ATCC 700345 / ANG-SQ1) protein is Phosphoribosylaminoimidazole-succinocarboxamide synthase.